The following is a 467-amino-acid chain: MSISSSNVTSGFIDIATKDEIEKYMYGGKTSTAYFVRETRKATWFTQVPVSLTRANGSANFGSEWSASISRAGDYLLYTWLRVRIPSVTLLSTNQFGANGRIRWCRNFMHNLIRECSITFNDLVAARFDHYHLDFWAAFTTPASKAVGYDNMIGNVSALIQPQPVPVAPATVSLPEADLNLPLPFFFSRDSGVALPTAALPYNEMRINFQFHDWQRLLILDNIAAVASQTVVPVVGATSDIATAPVLHHGTVWGNYAIVSNEERRRMGCSVRDILVEQVQTAPRHVWNPTTNDAPNYDIRFSHAIKALFFAVRNTTFSNQPSNYTTASPVITSTTVILEPSTGAFDPIHHTTLIYENTNRLNHMGSDYFSLVNPWYHAPTIPGLTGFHEYSYSLAFNEIDPMGSTNYGKLTNISIVPTASPAAKVGAAGTGPAGSGQNFPQTFEFIVTALNNNIIRISGGALGFPVL.

This sequence belongs to the NCLDV major capsid protein family. As to quaternary structure, homotrimer.

The protein localises to the virion. In terms of biological role, major capsid protein that self assembles to form an icosahedral capsid with a T=147 symmetry. Represents around 50% of the total virion protein mass. The chain is Major capsid protein (MCP) from Invertebrate iridescent virus 6 (IIV-6).